Consider the following 874-residue polypeptide: Alanine--tRNA ligase (874 aa).

Residues His562, His566, Cys664, and His668 each contribute to the Zn(2+) site.

Belongs to the class-II aminoacyl-tRNA synthetase family. Requires Zn(2+) as cofactor.

It localises to the cytoplasm. The catalysed reaction is tRNA(Ala) + L-alanine + ATP = L-alanyl-tRNA(Ala) + AMP + diphosphate. Its function is as follows. Catalyzes the attachment of alanine to tRNA(Ala) in a two-step reaction: alanine is first activated by ATP to form Ala-AMP and then transferred to the acceptor end of tRNA(Ala). Also edits incorrectly charged Ser-tRNA(Ala) and Gly-tRNA(Ala) via its editing domain. The protein is Alanine--tRNA ligase of Shewanella sp. (strain MR-7).